A 156-amino-acid polypeptide reads, in one-letter code: 6,7-dimethyl-8-ribityllumazine synthase (156 aa).

5-amino-6-(D-ribitylamino)uracil is bound by residues W28, 60–62 (SFE), and 82–84 (VVV). 87 to 88 (GT) provides a ligand contact to (2S)-2-hydroxy-3-oxobutyl phosphate. H90 (proton donor) is an active-site residue. F115 contacts 5-amino-6-(D-ribitylamino)uracil. R129 serves as a coordination point for (2S)-2-hydroxy-3-oxobutyl phosphate.

Belongs to the DMRL synthase family.

It carries out the reaction (2S)-2-hydroxy-3-oxobutyl phosphate + 5-amino-6-(D-ribitylamino)uracil = 6,7-dimethyl-8-(1-D-ribityl)lumazine + phosphate + 2 H2O + H(+). It participates in cofactor biosynthesis; riboflavin biosynthesis; riboflavin from 2-hydroxy-3-oxobutyl phosphate and 5-amino-6-(D-ribitylamino)uracil: step 1/2. Catalyzes the formation of 6,7-dimethyl-8-ribityllumazine by condensation of 5-amino-6-(D-ribitylamino)uracil with 3,4-dihydroxy-2-butanone 4-phosphate. This is the penultimate step in the biosynthesis of riboflavin. This Kocuria rhizophila (strain ATCC 9341 / DSM 348 / NBRC 103217 / DC2201) protein is 6,7-dimethyl-8-ribityllumazine synthase.